A 68-amino-acid chain; its full sequence is ATP synthase F(0) complex subunit 8 (68 aa).

The helical transmembrane segment at 8 to 24 threads the bilayer; sequence VWPTTITPMLLTLFLIT. Lys54 bears the N6-acetyllysine; alternate mark. Lys54 is modified (N6-succinyllysine; alternate). Lys57 bears the N6-acetyllysine mark.

It belongs to the ATPase protein 8 family. As to quaternary structure, component of the ATP synthase complex composed at least of ATP5F1A/subunit alpha, ATP5F1B/subunit beta, ATP5MC1/subunit c (homooctomer), MT-ATP6/subunit a, MT-ATP8/subunit 8, ATP5ME/subunit e, ATP5MF/subunit f, ATP5MG/subunit g, ATP5MK/subunit k, ATP5MJ/subunit j, ATP5F1C/subunit gamma, ATP5F1D/subunit delta, ATP5F1E/subunit epsilon, ATP5PF/subunit F6, ATP5PB/subunit b, ATP5PD/subunit d, ATP5PO/subunit OSCP. ATP synthase complex consists of a soluble F(1) head domain (subunits alpha(3) and beta(3)) - the catalytic core - and a membrane F(0) domain - the membrane proton channel (subunits c, a, 8, e, f, g, k and j). These two domains are linked by a central stalk (subunits gamma, delta, and epsilon) rotating inside the F1 region and a stationary peripheral stalk (subunits F6, b, d, and OSCP). Interacts with PRICKLE3.

The protein localises to the mitochondrion membrane. Its function is as follows. Subunit 8, of the mitochondrial membrane ATP synthase complex (F(1)F(0) ATP synthase or Complex V) that produces ATP from ADP in the presence of a proton gradient across the membrane which is generated by electron transport complexes of the respiratory chain. ATP synthase complex consist of a soluble F(1) head domain - the catalytic core - and a membrane F(1) domain - the membrane proton channel. These two domains are linked by a central stalk rotating inside the F(1) region and a stationary peripheral stalk. During catalysis, ATP synthesis in the catalytic domain of F(1) is coupled via a rotary mechanism of the central stalk subunits to proton translocation. In vivo, can only synthesize ATP although its ATP hydrolase activity can be activated artificially in vitro. Part of the complex F(0) domain. This chain is ATP synthase F(0) complex subunit 8, found in Pan paniscus (Pygmy chimpanzee).